The sequence spans 622 residues: Palmitoyltransferase ZDHHC13 (622 aa).

At Met1 the chain carries N-acetylmethionine. Residues 1–291 (MEGPGLGSQC…RLWRWLQKCE (291 aa)) are Cytoplasmic-facing. ANK repeat units follow at residues 43 to 78 (PLIE…VRQP), 81 to 110 (ENVS…VVDQ), 115 to 144 (LNST…DPTL), 148 to 177 (EGFS…SVNM), 181 to 211 (NGQT…SLNV), 216 to 245 (HQNT…SLDI), and 249 to 277 (KGET…KMRA). Residues 292–312 (LFLLLMLSVITMWAVGYILDF) traverse the membrane as a helical segment. Topologically, residues 313–320 (NSDSWLLK) are lumenal. A helical transmembrane segment spans residues 321–341 (GCLLVTLFFLTSLFPRFLVGY). At 342-347 (KNLVYL) the chain is on the cytoplasmic side. The chain crosses the membrane as a helical span at residues 348 to 368 (PTAFLLSSVFWIFMTWFILFF). The Lumenal segment spans residues 369–370 (PD). A helical transmembrane segment spans residues 371 to 391 (LAGAPFYFSFIFSIVAFLYFF). At 392-470 (YKTWATDPGF…RCIGFGNHHY (79 aa)) the chain is on the cytoplasmic side. The DHHC domain occupies 426–476 (TFCTSCLIRKPLRSLHCHVCNSCVARYDQHCLWTGRCIGFGNHHYYIFFLF). The active-site S-palmitoyl cysteine intermediate is the Cys456. Residues 471–491 (YIFFLFFLSMVCGWIIYGSFI) traverse the membrane as a helical segment. The Lumenal portion of the chain corresponds to 492-518 (YWSSHCATTFKEDGLWTYLNQIVACSP). Residues 519–539 (WVLYILMLATFHFSWSTFLLL) traverse the membrane as a helical segment. Residues 540–622 (NQLFQIAFLG…PAREKVLRSV (83 aa)) lie on the Cytoplasmic side of the membrane.

Belongs to the DHHC palmitoyltransferase family. AKR/ZDHHC17 subfamily. In terms of assembly, interacts (via ANK repeats) with CLIP3. Interacts (via ANK repeats) with DNAJC5 (via C-terminus). Interacts (via ANK repeats) with HTT. Interacts (via ANK repeats) with MAP6. Interacts (via ANK repeats) with SNAP23. Interacts (via ANK repeats) with SNAP25. May interact (via ANK repeats) with SPRED2.

It is found in the golgi apparatus membrane. Its subcellular location is the cytoplasmic vesicle membrane. It catalyses the reaction L-cysteinyl-[protein] + hexadecanoyl-CoA = S-hexadecanoyl-L-cysteinyl-[protein] + CoA. Palmitoyltransferase that could catalyze the addition of palmitate onto various protein substrates. Palmitoyltransferase for HTT and GAD2. May play a role in Mg(2+) transport. The protein is Palmitoyltransferase ZDHHC13 of Pongo abelii (Sumatran orangutan).